The following is a 356-amino-acid chain: DNA polymerase IV (356 aa).

Positions 7–188 (IIHIDMDCFY…LPLKKIPGVG (182 aa)) constitute a UmuC domain. Mg(2+) is bound by residues aspartate 11 and aspartate 106. The active site involves glutamate 107.

It belongs to the DNA polymerase type-Y family. In terms of assembly, monomer. Mg(2+) serves as cofactor.

The protein localises to the cytoplasm. It catalyses the reaction DNA(n) + a 2'-deoxyribonucleoside 5'-triphosphate = DNA(n+1) + diphosphate. In terms of biological role, poorly processive, error-prone DNA polymerase involved in untargeted mutagenesis. Copies undamaged DNA at stalled replication forks, which arise in vivo from mismatched or misaligned primer ends. These misaligned primers can be extended by PolIV. Exhibits no 3'-5' exonuclease (proofreading) activity. May be involved in translesional synthesis, in conjunction with the beta clamp from PolIII. The polypeptide is DNA polymerase IV (Actinobacillus pleuropneumoniae serotype 3 (strain JL03)).